Here is a 779-residue protein sequence, read N- to C-terminus: Ribosome-releasing factor 2, mitochondrial (779 aa).

Residues 68-353 (AKIRNIGIMA…AVTTYLPSPE (286 aa)) enclose the tr-type G domain. Residues 77-84 (AHIDAGKT), 141-145 (DTPGH), and 195-198 (NKMD) each bind GTP.

Belongs to the TRAFAC class translation factor GTPase superfamily. Classic translation factor GTPase family. EF-G/EF-2 subfamily.

It is found in the mitochondrion. The catalysed reaction is GTP + H2O = GDP + phosphate + H(+). Functionally, mitochondrial GTPase that mediates the disassembly of ribosomes from messenger RNA at the termination of mitochondrial protein biosynthesis. Acts in collaboration with MRRF. GTP hydrolysis follows the ribosome disassembly and probably occurs on the ribosome large subunit. Not involved in the GTP-dependent ribosomal translocation step during translation elongation. This chain is Ribosome-releasing factor 2, mitochondrial (Gfm2), found in Mus musculus (Mouse).